A 356-amino-acid polypeptide reads, in one-letter code: uncharacterized protein (356 aa).

The interval Glu25–Asn72 is disordered. Over residues Asn31 to Ser50 the composition is skewed to basic and acidic residues. Residues Asp51–Phe70 show a composition bias toward acidic residues. Residues Glu328–Asn356 adopt a coiled-coil conformation.

This sequence belongs to the mimivirus L17/R827 family.

This is an uncharacterized protein from Acanthamoeba polyphaga mimivirus (APMV).